The following is a 123-amino-acid chain: Large ribosomal subunit protein uL14 (123 aa).

Belongs to the universal ribosomal protein uL14 family. In terms of assembly, part of the 50S ribosomal subunit. Forms a cluster with proteins L3 and L19. In the 70S ribosome, L14 and L19 interact and together make contacts with the 16S rRNA in bridges B5 and B8.

Its function is as follows. Binds to 23S rRNA. Forms part of two intersubunit bridges in the 70S ribosome. The chain is Large ribosomal subunit protein uL14 from Koribacter versatilis (strain Ellin345).